The primary structure comprises 246 residues: Ribonuclease 3 (246 aa).

One can recognise an RNase III domain in the interval 8 to 137 (ANRLKTRLGF…LLGAIYLDQG (130 aa)). Residue Glu-50 coordinates Mg(2+). The active site involves Asp-54. Mg(2+) is bound by residues Asp-123 and Glu-126. Glu-126 is an active-site residue. Positions 164–233 (DYKTELQEIL…AKDAFQHLEG (70 aa)) constitute a DRBM domain. The interval 212 to 246 (SGHSKKEAEQQAAKDAFQHLEGMGKSGHKSAGPIR) is disordered.

The protein belongs to the ribonuclease III family. Homodimer. The cofactor is Mg(2+).

Its subcellular location is the cytoplasm. It catalyses the reaction Endonucleolytic cleavage to 5'-phosphomonoester.. Functionally, digests double-stranded RNA. Involved in the processing of primary rRNA transcript to yield the immediate precursors to the large and small rRNAs (23S and 16S). Processes some mRNAs, and tRNAs when they are encoded in the rRNA operon. Processes pre-crRNA and tracrRNA of type II CRISPR loci if present in the organism. This is Ribonuclease 3 from Desulforamulus reducens (strain ATCC BAA-1160 / DSM 100696 / MI-1) (Desulfotomaculum reducens).